The primary structure comprises 206 residues: Probable GTP-binding protein EngB (206 aa).

Residues 8 to 195 enclose the EngB-type G domain; sequence RDAEVVLVGR…EECLRTRFHE (188 aa). GTP is bound by residues 16–23, 41–45, 60–63, 140–143, and 175–177; these read GRSNVGKS, GVTRQ, DLPG, NKTD, and ICA. Positions 23 and 43 each coordinate Mg(2+).

Belongs to the TRAFAC class TrmE-Era-EngA-EngB-Septin-like GTPase superfamily. EngB GTPase family. Mg(2+) is required as a cofactor.

In terms of biological role, necessary for normal cell division and for the maintenance of normal septation. The polypeptide is Probable GTP-binding protein EngB (Halorubrum lacusprofundi (strain ATCC 49239 / DSM 5036 / JCM 8891 / ACAM 34)).